We begin with the raw amino-acid sequence, 168 residues long: NADH-quinone oxidoreductase subunit B (168 aa).

[4Fe-4S] cluster contacts are provided by Cys49, Cys50, Cys114, and Cys144.

It belongs to the complex I 20 kDa subunit family. In terms of assembly, NDH-1 is composed of 14 different subunits. Subunits NuoB, C, D, E, F, and G constitute the peripheral sector of the complex. The cofactor is [4Fe-4S] cluster.

The protein resides in the cell membrane. It catalyses the reaction a quinone + NADH + 5 H(+)(in) = a quinol + NAD(+) + 4 H(+)(out). Functionally, NDH-1 shuttles electrons from NADH, via FMN and iron-sulfur (Fe-S) centers, to quinones in the respiratory chain. Couples the redox reaction to proton translocation (for every two electrons transferred, four hydrogen ions are translocated across the cytoplasmic membrane), and thus conserves the redox energy in a proton gradient. The chain is NADH-quinone oxidoreductase subunit B from Wolbachia sp. subsp. Brugia malayi (strain TRS).